Here is a 177-residue protein sequence, read N- to C-terminus: Large ribosomal subunit protein uL6 (177 aa).

It belongs to the universal ribosomal protein uL6 family. In terms of assembly, part of the 50S ribosomal subunit.

Its function is as follows. This protein binds to the 23S rRNA, and is important in its secondary structure. It is located near the subunit interface in the base of the L7/L12 stalk, and near the tRNA binding site of the peptidyltransferase center. The chain is Large ribosomal subunit protein uL6 from Aromatoleum aromaticum (strain DSM 19018 / LMG 30748 / EbN1) (Azoarcus sp. (strain EbN1)).